Here is a 406-residue protein sequence, read N- to C-terminus: MAKIKVKNPVVEIDGDEMTRIIWEWIRERLILPYLDVDLKYYDLSVEKRDETSDQITIDAANAIKEYGVGVKCATITPDEARVEEFGLKKMWKSPNGTIRNILGGVVFREPIVIKNVPRLVPGWTDPIVVGRHAFGDQYKATDFKVPGAGTLTMKWVGTNGEELEYEVFEFPSAGVAMGMYNLDESIRDFAKASFNYGLNRGWPVYLSTKNTILKAYDGRFKDLFQEVFDAEFADKFKAAGIVYEHRLIDDMVASALKWSGKFVWACKNYDGDVQSDTVAQGFGSLGLMTSVLLSPDGKTVEAEAAHGTVTRHYRQHQQGKATSTNPIASIFAWTQGLSFRGKFDDTPDVVKFAETLEQVCIKTVEGGAMTKDLALLIGPDQAWMTTEQFFEAIRVNLEAEMAKWA.

Residues Lys-72, Thr-75, Thr-77, and Arg-82 each coordinate NADP(+). 5 residues coordinate D-threo-isocitrate: Ser-94, Asn-96, Arg-100, Glu-110, and Arg-132. Mn(2+) is bound by residues Asp-250, Asp-273, and Asp-277. NADP(+) is bound by residues Gly-308, Thr-309, Val-310, His-313, and Asn-326.

The protein belongs to the isocitrate and isopropylmalate dehydrogenases family. Homodimer. Mg(2+) is required as a cofactor. It depends on Mn(2+) as a cofactor.

It catalyses the reaction D-threo-isocitrate + NADP(+) = 2-oxoglutarate + CO2 + NADPH. Catalyzes the oxidative decarboxylation of isocitrate to 2-oxoglutarate and carbon dioxide with the concomitant reduction of NADP(+). The protein is Isocitrate dehydrogenase [NADP] (icd) of Sphingobium yanoikuyae (Sphingomonas yanoikuyae).